Here is a 91-residue protein sequence, read N- to C-terminus: Cytochrome b-c1 complex subunit 6, mitochondrial (91 aa).

The N-terminal 13 residues, 1–13 (MGLEDEQKMLTES), are a transit peptide targeting the mitochondrion. Residues 1-30 (MGLEDEQKMLTESGDPEEEEEEEEELVDPL) form a disordered region. Residues 14–27 (GDPEEEEEEEEELV) are compositionally biased toward acidic residues. 2 disulfide bridges follow: Cys-37–Cys-81 and Cys-53–Cys-67. N6-acetyllysine is present on Lys-42. Position 85 is an N6-acetyllysine (Lys-85).

This sequence belongs to the UQCRH/QCR6 family. In terms of assembly, component of the ubiquinol-cytochrome c oxidoreductase (cytochrome b-c1 complex, complex III, CIII), a multisubunit enzyme composed of 11 subunits. The complex is composed of 3 respiratory subunits cytochrome b, cytochrome c1 and Rieske protein UQCRFS1, 2 core protein subunits UQCRC1/QCR1 and UQCRC2/QCR2, and 6 low-molecular weight protein subunits UQCRH/QCR6, UQCRB/QCR7, UQCRQ/QCR8, UQCR10/QCR9, UQCR11/QCR10 and subunit 9, the cleavage product of Rieske protein UQCRFS1. The complex exists as an obligatory dimer and forms supercomplexes (SCs) in the inner mitochondrial membrane with NADH-ubiquinone oxidoreductase (complex I, CI) and cytochrome c oxidase (complex IV, CIV), resulting in different assemblies (supercomplex SCI(1)III(2)IV(1) and megacomplex MCI(2)III(2)IV(2)).

The protein localises to the mitochondrion inner membrane. In terms of biological role, component of the ubiquinol-cytochrome c oxidoreductase, a multisubunit transmembrane complex that is part of the mitochondrial electron transport chain which drives oxidative phosphorylation. The respiratory chain contains 3 multisubunit complexes succinate dehydrogenase (complex II, CII), ubiquinol-cytochrome c oxidoreductase (cytochrome b-c1 complex, complex III, CIII) and cytochrome c oxidase (complex IV, CIV), that cooperate to transfer electrons derived from NADH and succinate to molecular oxygen, creating an electrochemical gradient over the inner membrane that drives transmembrane transport and the ATP synthase. The cytochrome b-c1 complex catalyzes electron transfer from ubiquinol to cytochrome c, linking this redox reaction to translocation of protons across the mitochondrial inner membrane, with protons being carried across the membrane as hydrogens on the quinol. In the process called Q cycle, 2 protons are consumed from the matrix, 4 protons are released into the intermembrane space and 2 electrons are passed to cytochrome c. The sequence is that of Cytochrome b-c1 complex subunit 6, mitochondrial (UQCRH) from Homo sapiens (Human).